The primary structure comprises 130 residues: Cysteine methyltransferase (130 aa).

The catalysed reaction is [trehalose-6-phosphate synthase]-L-cysteine + S-adenosyl-L-methionine = [trehalose-6-phosphate synthase]-S-methyl-L-cysteine + S-adenosyl-L-homocysteine + H(+). S-adenosyl-L-methionine-dependent protein-cysteine S-methyltransferase with broad substrate specificity. Methylates trehalose-6-phosphate synthase (TPS), enhancing its enzymatic activity and promoting trehalose synthesis upon entry of cells into stationary phase. This Saccharomyces cerevisiae (Baker's yeast) protein is Cysteine methyltransferase.